The sequence spans 1358 residues: Tenascin-R (1358 aa).

The N-terminal stretch at 1–31 is a signal peptide; that stretch reads MGADGETVVLKNMLIGINLILLGSMIKPSEC. Threonine 36 and threonine 37 each carry an O-linked (GalNAc...) threonine glycan. N-linked (GlcNAc...) asparagine glycosylation occurs at asparagine 55. Positions 127 to 157 form a coiled coil; it reads CASSAQVLQELLSRIEMLEREVSVLRDQCNA. Serine 176 carries O-linked (Xyl...) (chondroitin sulfate) serine glycosylation. Residues asparagine 180 and asparagine 198 are each glycosylated (N-linked (GlcNAc...) asparagine). EGF-like domains lie at 188 to 199, 219 to 230, and 250 to 261; these read CICNEGWFGKNC, CICDSEYSGDDC, and CVCEEPYTGEDC. Serine 271 carries O-linked (Xyl...) (chondroitin sulfate) serine glycosylation. An N-linked (GlcNAc...) asparagine glycan is attached at asparagine 278. Residues 281–292 form the EGF-like 4 domain; sequence CLCEEGYVGEDC. Cystine bridges form between cysteine 292-cysteine 301, cysteine 297-cysteine 312, and cysteine 314-cysteine 323. The O-linked (Xyl...) (chondroitin sulfate) serine glycan is linked to serine 302. Residues 312 to 323 enclose the EGF-like 5 domain; it reads CVCEEGYQGPDC. Fibronectin type-III domains follow at residues 328 to 420, 421 to 505, 506 to 595, 596 to 687, 688 to 777, 778 to 865, 866 to 955, 956 to 1042, and 1043 to 1130; these read PPED…TPQG, LQFK…TVID, GPTQ…TEID, APKN…TELD, SPRD…FRPI, SHLH…TGID, PPKD…AMDN, PVDL…TLLD, and PPAN…TGGR. Asparagine 392, asparagine 470, and asparagine 581 each carry an N-linked (GlcNAc...) asparagine glycan. Serine 724 is subject to Phosphoserine. Residues asparagine 791, asparagine 874, asparagine 1036, asparagine 1046, and asparagine 1261 are each glycosylated (N-linked (GlcNAc...) asparagine). Residues 1129–1344 enclose the Fibrinogen C-terminal domain; that stretch reads GRVFPHPQDC…FVEMKMRPYN (216 aa).

Belongs to the tenascin family. As to quaternary structure, forms oligomers. Interacts with CNTN1, TNC, and FN1. Interacts with BCAN and ACAN in a calcium-dependent manner. Interacts with SCN2B, PTPRZ1, and CSPG3. Contains N-linked oligosaccharides, O-linked sialylated structures and O-linked chondroitin sulfate glycosaminoglycans. Contains N-linked oligosaccharides with a sulfated carbohydrate structure. O-glycosylated on Thr-36 or Thr-37 with a core 1 or possibly core 8 glycan. Brain specific.

It is found in the secreted. The protein localises to the extracellular space. The protein resides in the extracellular matrix. Neural extracellular matrix (ECM) protein involved in interactions with different cells and matrix components. These interactions can influence cellular behavior by either evoking a stable adhesion and differentiation, or repulsion and inhibition of neurite growth. Binding to cell surface gangliosides inhibits RGD-dependent integrin-mediated cell adhesion and results in an inhibition of PTK2/FAK1 (FAK) phosphorylation and cell detachment. Binding to membrane surface sulfatides results in a oligodendrocyte adhesion and differentiation. Interaction with CNTN1 induces a repulsion of neurons and an inhibition of neurite outgrowth. Interacts with SCN2B may play a crucial role in clustering and regulation of activity of sodium channels at nodes of Ranvier. TNR-linked chondroitin sulfate glycosaminoglycans are involved in the interaction with FN1 and mediate inhibition of cell adhesion and neurite outgrowth. The highly regulated addition of sulfated carbohydrate structure may modulate the adhesive properties of TNR over the course of development and during synapse maintenance. This chain is Tenascin-R (TNR), found in Homo sapiens (Human).